We begin with the raw amino-acid sequence, 201 residues long: Recombination protein RecR (201 aa).

A C4-type zinc finger spans residues 60–75; the sequence is CSCCGNVDTIDPCTVC. One can recognise a Toprim domain in the interval 83 to 178; the sequence is SVIIVVEDVA…KITRLAHGVP (96 aa).

This sequence belongs to the RecR family.

Its function is as follows. May play a role in DNA repair. It seems to be involved in an RecBC-independent recombinational process of DNA repair. It may act with RecF and RecO. In Sinorhizobium fredii (strain NBRC 101917 / NGR234), this protein is Recombination protein RecR.